An 87-amino-acid chain; its full sequence is Large ribosomal subunit protein bL27 (87 aa).

Residues 1–21 form a disordered region; it reads MAHKKAGGSSRNGRDSESKRL.

The protein belongs to the bacterial ribosomal protein bL27 family.

In Burkholderia ambifaria (strain MC40-6), this protein is Large ribosomal subunit protein bL27.